The primary structure comprises 121 residues: Small ribosomal subunit protein uS13 (121 aa).

The disordered stretch occupies residues 92–121 (RRGLPVRGQNSKNNARTRKGPKRTVANKKK). Residues 106-121 (ARTRKGPKRTVANKKK) are compositionally biased toward basic residues.

The protein belongs to the universal ribosomal protein uS13 family. Part of the 30S ribosomal subunit. Forms a loose heterodimer with protein S19. Forms two bridges to the 50S subunit in the 70S ribosome.

Functionally, located at the top of the head of the 30S subunit, it contacts several helices of the 16S rRNA. In the 70S ribosome it contacts the 23S rRNA (bridge B1a) and protein L5 of the 50S subunit (bridge B1b), connecting the 2 subunits; these bridges are implicated in subunit movement. Contacts the tRNAs in the A and P-sites. In Shouchella clausii (strain KSM-K16) (Alkalihalobacillus clausii), this protein is Small ribosomal subunit protein uS13.